Reading from the N-terminus, the 337-residue chain is F-box protein At2g27310 (337 aa).

Residues 10–58 (DSISTLHSDIIQTQILTRLDGPTLASTATTSSYLQTLCTEEKLWQELSI) form the F-box domain.

The chain is F-box protein At2g27310 from Arabidopsis thaliana (Mouse-ear cress).